The following is a 189-amino-acid chain: Elongation factor P (189 aa).

Lysine 34 bears the N6-(3,6-diaminohexanoyl)-5-hydroxylysine mark.

The protein belongs to the elongation factor P family. In terms of processing, may be beta-lysylated on the epsilon-amino group of Lys-34 by the combined action of EpmA and EpmB, and then hydroxylated on the C5 position of the same residue by EpmC (if this protein is present). Lysylation is critical for the stimulatory effect of EF-P on peptide-bond formation. The lysylation moiety may extend toward the peptidyltransferase center and stabilize the terminal 3-CCA end of the tRNA. Hydroxylation of the C5 position on Lys-34 may allow additional potential stabilizing hydrogen-bond interactions with the P-tRNA.

It is found in the cytoplasm. Its pathway is protein biosynthesis; polypeptide chain elongation. Its function is as follows. Involved in peptide bond synthesis. Alleviates ribosome stalling that occurs when 3 or more consecutive Pro residues or the sequence PPG is present in a protein, possibly by augmenting the peptidyl transferase activity of the ribosome. Modification of Lys-34 is required for alleviation. In Baumannia cicadellinicola subsp. Homalodisca coagulata, this protein is Elongation factor P.